Consider the following 481-residue polypeptide: MIKEWESVIGLEVHLQLKTGTKVWCGCKSDYDESGINLHTCPICLGHPGALPKLNKKVVDYAIKAALALNCQINNESGFDRKNYFYPDAPKNYQITQFEKSYAEKGYLEFKLNSGRQVKIGITKIQIEEDTAKAVHGKNESYLNFNRASIPLIEIISEPDMRNSEEAYEYLNTLKNIIKYTKISDVSMETGSLRCDANISVMEKGSKVFGTRVEVKNLNSFKAVARAIDYEIGRQIELIQNGGKVDQETRLWDEENQITRVMRSKEEAMDYRYFNEPDLLKLVISDEEIEEIKKDMPETRLAKIERFKNNYSLDEKDAFILTEEVELSDYFEEVVKYSNNAKLSSNWILTEVLRILKHKNIDIEKFTISSENLAKIIKLIDKNTISSKIAKEVFEIALDDSRDPEIIVKEKGLVQLSDTSEIEKMVDEVLANNQKMVDDYKSADEGRKPRVLKGIVGQVMKISKGKANPEIVNDLIMEKLK.

This sequence belongs to the GatB/GatE family. GatB subfamily. Heterotrimer of A, B and C subunits.

The enzyme catalyses L-glutamyl-tRNA(Gln) + L-glutamine + ATP + H2O = L-glutaminyl-tRNA(Gln) + L-glutamate + ADP + phosphate + H(+). It catalyses the reaction L-aspartyl-tRNA(Asn) + L-glutamine + ATP + H2O = L-asparaginyl-tRNA(Asn) + L-glutamate + ADP + phosphate + 2 H(+). Functionally, allows the formation of correctly charged Asn-tRNA(Asn) or Gln-tRNA(Gln) through the transamidation of misacylated Asp-tRNA(Asn) or Glu-tRNA(Gln) in organisms which lack either or both of asparaginyl-tRNA or glutaminyl-tRNA synthetases. The reaction takes place in the presence of glutamine and ATP through an activated phospho-Asp-tRNA(Asn) or phospho-Glu-tRNA(Gln). This is Aspartyl/glutamyl-tRNA(Asn/Gln) amidotransferase subunit B from Fusobacterium nucleatum subsp. nucleatum (strain ATCC 25586 / DSM 15643 / BCRC 10681 / CIP 101130 / JCM 8532 / KCTC 2640 / LMG 13131 / VPI 4355).